Consider the following 343-residue polypeptide: Dimethyladenosine transferase 1, mitochondrial (343 aa).

S-adenosyl-L-methionine is bound by residues 28 to 31 (QNFL), Asn29, Leu31, Gly56, Glu78, Asp133, and Asn169.

The protein belongs to the class I-like SAM-binding methyltransferase superfamily. rRNA adenine N(6)-methyltransferase family. KsgA subfamily.

Its subcellular location is the mitochondrion. Its function is as follows. Probable S-adenosyl-L-methionine-dependent methyltransferase which specifically dimethylates mitochondrial 12S rRNA at the conserved stem loop. Also required for basal transcription of mitochondrial DNA. Stimulates transcription independently of the methyltransferase activity. The protein is Dimethyladenosine transferase 1, mitochondrial of Vermamoeba vermiformis (Amoeba).